The primary structure comprises 79 residues: Short neurotoxin 6 (79 aa).

Positions 1-21 (MKTLLLTLVMVTIMCLDLGYT) are cleaved as a signal peptide. 4 cysteine pairs are disulfide-bonded: cysteine 24/cysteine 41, cysteine 34/cysteine 59, cysteine 63/cysteine 71, and cysteine 72/cysteine 77.

The protein belongs to the three-finger toxin family. Short-chain subfamily. Type III alpha-neurotoxin sub-subfamily. As to expression, expressed by the venom gland.

It is found in the secreted. Binds with high affinity to muscle nicotinic acetylcholine receptor (nAChR) and hinders acetylcholine binding to the receptor, thereby impairing neuromuscular transmission. Competes with the binding of alpha-bungarotoxin on muscle AChR (from Torpedo) with an IC(50) of 0.18 uM. Causes muscle paralysis, spasms and increased respiration. This chain is Short neurotoxin 6, found in Pseudonaja textilis (Eastern brown snake).